A 266-amino-acid chain; its full sequence is Histidinol-phosphatase (266 aa).

Mg(2+)-binding residues include Glu-69, Asp-84, Ile-86, and Asp-87. Position 69 (Glu-69) interacts with substrate. Substrate-binding positions include 86–89 (IDGT), Arg-190, and Asp-218. Residue Asp-218 participates in Mg(2+) binding.

This sequence belongs to the inositol monophosphatase superfamily. It depends on Mg(2+) as a cofactor.

It catalyses the reaction L-histidinol phosphate + H2O = L-histidinol + phosphate. It functions in the pathway amino-acid biosynthesis; L-histidine biosynthesis; L-histidine from 5-phospho-alpha-D-ribose 1-diphosphate: step 8/9. Catalyzes the dephosphorylation of histidinol-phosphate to histidinol, the direct precursor of histidine. This chain is Histidinol-phosphatase, found in Streptomyces coelicolor (strain ATCC BAA-471 / A3(2) / M145).